Consider the following 365-residue polypeptide: Coxsackievirus and adenovirus receptor homolog (365 aa).

A signal peptide spans 1-19; it reads MALLLCFVLLCGVADFTSS. 2 Ig-like C2-type domains span residues 20–136 and 141–228; these read LSIT…FLLT and PSGT…LRLD. The Extracellular segment spans residues 20-238; the sequence is LSITTPEQRI…VVPPSNRAGT (219 aa). 3 disulfides stabilise this stretch: Cys-41/Cys-120, Cys-146/Cys-223, and Cys-162/Cys-212. N-linked (GlcNAc...) asparagine glycosylation is present at Asn-106. Residues 239 to 259 form a helical membrane-spanning segment; sequence IAGAVIGTLLALVLIGAILFC. S-palmitoyl cysteine attachment occurs at residues Cys-259 and Cys-260. Residues 260-365 lie on the Cytoplasmic side of the membrane; it reads CHKKRREEKY…PAQSKDGSIV (106 aa). The segment covering 269–282 has biased composition (basic and acidic residues); the sequence is YEKEVHHDIREDVP. Positions 269 to 315 are disordered; it reads YEKEVHHDIREDVPPPKSRTSTARSYIGSNHSSLGSMSPSNMEGYSK. The segment covering 286–315 has biased composition (polar residues); that stretch reads SRTSTARSYIGSNHSSLGSMSPSNMEGYSK. Residues Ser-297, Ser-304, Ser-306, Ser-323, Ser-332, and Ser-363 each carry the phosphoserine modification. The PDZ-binding motif lies at 360-365; it reads KDGSIV.

In terms of assembly, monomer. May form homodimer. Interacts with LNX, MAGI1, DLG4, PRKCABP, TJP1 and CTNNB1. Interacts with MPDZ; recruits MPDZ to intercellular contact sites. Interacts with JAML (homodimeric form). Post-translationally, N-glycosylated. Palmitoylated on Cys-259 and/or Cys-260; required for proper localization to the plasma membrane. In terms of tissue distribution, expressed in heart, brain, spleen, lung, liver, muscle, kidney, testis, spleen and skeletal muscle.

The protein resides in the cell membrane. The protein localises to the basolateral cell membrane. It localises to the cell junction. It is found in the tight junction. Its subcellular location is the adherens junction. Its function is as follows. Component of the epithelial apical junction complex that may function as a homophilic cell adhesion molecule and is essential for tight junction integrity. Also involved in transepithelial migration of leukocytes through adhesive interactions with JAML a transmembrane protein of the plasma membrane of leukocytes. The interaction between both receptors also mediates the activation of gamma-delta T-cells, a subpopulation of T-cells residing in epithelia and involved in tissue homeostasis and repair. Upon epithelial CXADR-binding, JAML induces downstream cell signaling events in gamma-delta T-cells through PI3-kinase and MAP kinases. It results in proliferation and production of cytokines and growth factors by T-cells that in turn stimulate epithelial tissues repair. This chain is Coxsackievirus and adenovirus receptor homolog (Cxadr), found in Rattus norvegicus (Rat).